The chain runs to 509 residues: uncharacterized protein (509 aa).

It is found in the virion. This is an uncharacterized protein from Acanthamoeba polyphaga mimivirus (APMV).